The following is a 355-amino-acid chain: Syntaxin-5 (355 aa).

The Cytoplasmic segment spans residues M1–R333. The span at P28 to D37 shows a compositional bias: polar residues. Residues P28–P51 form a disordered region. Residues P40 to P51 show a composition bias toward pro residues. An IxM motif; signal for cargo packaging into COPII-coated vesicles motif is present at residues I245 to M247. In terms of domain architecture, t-SNARE coiled-coil homology spans D263–Y325. Residues F287–A318 adopt a coiled-coil conformation. A helical; Anchor for type IV membrane protein transmembrane segment spans residues W334–L354. Residue A355 is a topological domain, vesicular.

The protein belongs to the syntaxin family. In terms of assembly, part of a ternary complex containing STX5A, NSFL1C and VCP. Identified in a unique SNARE complex composed of the Golgi SNAREs GOSR1, GOSR2, YKT6 and VTI1A. Component of a SNARE complex consisting of STX5, YKT6, GOSR1 and BET1L. Interacts with BET1L. Interacts with BET1. Interacts with COG4. Interacts with GM130/GOLGA2. Interacts (via IxM motif) with SEC24C and SEC24D; mediates STX5 packaging into COPII-coated vesicles. Interacts with VLDLR; this interaction mediates VLDLR translocation from the endoplasmic reticulum to the plasma membrane.

It localises to the endoplasmic reticulum-Golgi intermediate compartment membrane. The protein resides in the golgi apparatus membrane. Functionally, mediates endoplasmic reticulum to Golgi transport. Together with p115/USO1 and GM130/GOLGA2, involved in vesicle tethering and fusion at the cis-Golgi membrane to maintain the stacked and inter-connected structure of the Golgi apparatus. Its function is as follows. Required for Golgi to endoplasmic reticulum retrogade transport, and for intra-Golgi transport. (Microbial infection) Required for the efficient production of infectious virion during human cytomegalovirus infection. Mechanistically, participates in the formation of the cytoplasmic viral assembly compartment where tegument acquisition and envelopment occur. The protein is Syntaxin-5 (STX5) of Homo sapiens (Human).